The chain runs to 335 residues: Ketol-acid reductoisomerase (NADP(+)) 2 (335 aa).

The region spanning 1 to 180 (MKTYYEKDAN…GCTRAGVIET (180 aa)) is the KARI N-terminal Rossmann domain. NADP(+) contacts are provided by residues 24 to 27 (YGSQ), Arg-47, Ser-51, and 81 to 84 (DEQQ). The active site involves His-106. Gly-132 is a binding site for NADP(+). The region spanning 181–326 (TFQEETETDL…AELREMMSWI (146 aa)) is the KARI C-terminal knotted domain. Positions 189, 193, 225, and 229 each coordinate Mg(2+). Ser-250 serves as a coordination point for substrate.

This sequence belongs to the ketol-acid reductoisomerase family. It depends on Mg(2+) as a cofactor.

It carries out the reaction (2R)-2,3-dihydroxy-3-methylbutanoate + NADP(+) = (2S)-2-acetolactate + NADPH + H(+). The catalysed reaction is (2R,3R)-2,3-dihydroxy-3-methylpentanoate + NADP(+) = (S)-2-ethyl-2-hydroxy-3-oxobutanoate + NADPH + H(+). The protein operates within amino-acid biosynthesis; L-isoleucine biosynthesis; L-isoleucine from 2-oxobutanoate: step 2/4. Its pathway is amino-acid biosynthesis; L-valine biosynthesis; L-valine from pyruvate: step 2/4. Its function is as follows. Involved in the biosynthesis of branched-chain amino acids (BCAA). Catalyzes an alkyl-migration followed by a ketol-acid reduction of (S)-2-acetolactate (S2AL) to yield (R)-2,3-dihydroxy-isovalerate. In the isomerase reaction, S2AL is rearranged via a Mg-dependent methyl migration to produce 3-hydroxy-3-methyl-2-ketobutyrate (HMKB). In the reductase reaction, this 2-ketoacid undergoes a metal-dependent reduction by NADPH to yield (R)-2,3-dihydroxy-isovalerate. The polypeptide is Ketol-acid reductoisomerase (NADP(+)) 2 (Bacillus cereus (strain ZK / E33L)).